Here is a 127-residue protein sequence, read N- to C-terminus: MRPLDIVELAEPEEVEVLEPEEDFEQFLLPVINEMREDIASLTREHGRAYLRNRSKLWEMDNMLIQIKTQVEASEESALNHLQNPGDAAEGRAAKRCEKAEEKAKEIAKMAEMLVELVRRIEKSESS.

The stretch at 92–126 forms a coiled coil; that stretch reads RAAKRCEKAEEKAKEIAKMAEMLVELVRRIEKSES.

Belongs to the MORF4 family-associated protein family. As to quaternary structure, found in a complex composed of MORF4L1, MRFAP1 and RB1. Interacts via its N-terminus with MORF4L1. Interacts with CSTB and MORF4L2.

The protein resides in the nucleus. It is found in the cytoplasm. The protein localises to the perinuclear region. This chain is MORF4 family-associated protein 1, found in Homo sapiens (Human).